We begin with the raw amino-acid sequence, 1174 residues long: Tight junction protein 2 (1174 aa).

Residues 10–97 form the PDZ 1 domain; that stretch reads TVTLQKDSKR…IAAIVVKRPR (88 aa). A phosphoserine mark is found at serine 107, serine 127, serine 130, serine 140, serine 145, serine 147, serine 151, serine 173, serine 195, and serine 217. Over residues 125–137 the composition is skewed to basic and acidic residues; the sequence is GRSARSGYSERSR. A disordered region spans residues 125–290; that stretch reads GRSARSGYSE…AGQPDSDRPI (166 aa). Residues 146-214 are compositionally biased toward basic and acidic residues; sequence RSWEDSPERG…DYGRPGERSH (69 aa). The segment covering 220–235 has biased composition (basic and acidic residues); that stretch reads RGYDRGYDRGYDRGYD. Residue serine 239 is modified to Phosphoserine. Composition is skewed to basic and acidic residues over residues 243–266 and 274–288; these read EYGRRTQPDARHAGSRSRSREHLR and LRGRPDHAGQPDSDR. The PDZ 2 domain occupies 291 to 369; it reads GVLLMKSKAN…KLQLVVLRDS (79 aa). Serine 309, serine 382, serine 384, serine 390, serine 399, serine 408, serine 414, and serine 415 each carry phosphoserine. Positions 391-430 are disordered; it reads EIESNRSFSPEERRQQYSDYDYHSSNEKLKERPNSREDMQ. The span at 399-430 shows a compositional bias: basic and acidic residues; sequence SPEERRQQYSDYDYHSSNEKLKERPNSREDMQ. Residue threonine 439 is modified to Phosphothreonine. The disordered stretch occupies residues 456–490; the sequence is ENSKEPRYQEEPPAPQPKAAPRTFLRPSPEDEAIY. Serine 483 carries the post-translational modification Phosphoserine. Residues 493–574 form the PDZ 3 domain; the sequence is NTKMVRFKKG…GEMVTILAQS (82 aa). Residue tyrosine 558 is modified to Phosphotyrosine. Residues 588–653 enclose the SH3 domain; that stretch reads GDSFFIRSHF…PNKSRAEQMA (66 aa). The Guanylate kinase-like domain maps to 679-860; the sequence is MKKNLRKSRE…WFGSLKDTIQ (182 aa). Phosphoserine occurs at positions 686 and 886. The residue at position 889 (threonine 889) is a Phosphothreonine. Phosphoserine is present on residues serine 897 and serine 904. Disordered stretches follow at residues 904–1065 and 1100–1174; these read SDFE…VLGK and DIYA…DTEL. Phosphothreonine is present on residues threonine 909 and threonine 917. Positions 940–951 are enriched in basic and acidic residues; it reads VQHEESIRKPSP. Serine 950, serine 962, serine 970, serine 990, and serine 1052 each carry phosphoserine. Over residues 978 to 1000 the composition is skewed to basic and acidic residues; it reads EPPKAKTQNREESFDISRSHDYK. The segment covering 1044–1056 has biased composition (acidic residues); sequence ESEEVGEGSEEQE. Tyrosine 1102 carries the phosphotyrosine modification. Residues serine 1131 and serine 1143 each carry the phosphoserine modification. Basic and acidic residues predominate over residues 1150–1159; it reads YRQQLSEHSK. An interaction with SCRIB region spans residues 1172–1174; that stretch reads TEL.

Belongs to the MAGUK family. As to quaternary structure, homodimer. Interacts (via PDZ2 domain) with TJP1/ZO1 (via PDZ2 domain). Interacts with UBN1. Interacts with SCRIB. Interacts with OCLN. Interacts with SAFB in the nucleus. Interacts with USP53 (via the C-terminal region). Interacts with claudins, including CLDN1, CLDN2, CLDN3, CLDN5 and CLDN7. Interacts with CLDN18. Interacts (via N-terminus) with CTNNA1. In terms of processing, phosphorylated.

Its subcellular location is the cell junction. It is found in the adherens junction. The protein resides in the cell membrane. The protein localises to the nucleus. It localises to the tight junction. Functionally, plays a role in tight junctions and adherens junctions. Acts as a positive regulator of RANKL-induced osteoclast differentiation, potentially via mediating downstream transcriptional activity. This is Tight junction protein 2 from Canis lupus familiaris (Dog).